Reading from the N-terminus, the 216-residue chain is Putative transmembrane protein RNF32-DT (216 aa).

The helical transmembrane segment at 177-197 threads the bilayer; sequence WIPLLLVAGCVSCFVGLAVCV.

As to expression, expressed only in testis.

Its subcellular location is the cytoplasm. The protein localises to the membrane. The sequence is that of Putative transmembrane protein RNF32-DT from Homo sapiens (Human).